A 278-amino-acid chain; its full sequence is Protoheme IX farnesyltransferase 1 (278 aa).

A run of 9 helical transmembrane segments spans residues 12-32, 35-55, 76-96, 98-118, 129-149, 158-178, 199-221, 226-248, and 255-275; these read VIWL…GGVD, LFSL…FNHY, LITP…GISL, FLLL…FYAV, WLNI…GYAL, AVLI…ALAF, ERAV…WLYL, GAGG…YAAV, and MWKM…ALIL.

It belongs to the UbiA prenyltransferase family. Protoheme IX farnesyltransferase subfamily.

The protein resides in the cell membrane. It catalyses the reaction heme b + (2E,6E)-farnesyl diphosphate + H2O = Fe(II)-heme o + diphosphate. It participates in porphyrin-containing compound metabolism; heme O biosynthesis; heme O from protoheme: step 1/1. In terms of biological role, converts heme B (protoheme IX) to heme O by substitution of the vinyl group on carbon 2 of heme B porphyrin ring with a hydroxyethyl farnesyl side group. The polypeptide is Protoheme IX farnesyltransferase 1 (Pyrobaculum aerophilum (strain ATCC 51768 / DSM 7523 / JCM 9630 / CIP 104966 / NBRC 100827 / IM2)).